The primary structure comprises 484 residues: MTTLMVQGTTSDAGKSTLVTALCRWLLRQGVAVVPFKPQNMALNSAVTADGGEIGRAQAVQAQACRLQPHTDMNPVLLKPNSDTGAQVIIHGRAVTSMNAVAYHDYKTTAMQAVLASHQRLSAAYPVVMVEGAGSPAEINLRAGDIANMGFAEAVDCPVILVADINRGGVFAHLVGTLELLSTTEQARVKGFVINRFRGDIALLQPGLDWLEQRTGKPVLGVLPYVTDLHLEAEDGIDVRQGVKHARVLKVIVPVLPRISNHTDFDPLRLHSQVDLQFIGPGQPIPAADLIILPGSKSVRGDLAQLRERGWDKAIERHLRYGGKLIGICGGLQMLGREVHDPLGLEGAAGSSQGLGLLDYATVLEAEKQLRNVAGTLSLEAATVTGYEIHAGVTTGPALAQPAVQLADGRHDGAVSADDQILATYLHGLFEGSQSCAALLRWAGLEDVQVIDYEALREHDIERLADLVEKHLDTAQLRQLCGVA.

Residues 248-435 enclose the GATase cobBQ-type domain; the sequence is VLKVIVPVLP…LHGLFEGSQS (188 aa). The Nucleophile role is filled by cysteine 329. The active site involves histidine 427.

Belongs to the CobB/CobQ family. CobQ subfamily.

It participates in cofactor biosynthesis; adenosylcobalamin biosynthesis. Catalyzes amidations at positions B, D, E, and G on adenosylcobyrinic A,C-diamide. NH(2) groups are provided by glutamine, and one molecule of ATP is hydrogenolyzed for each amidation. In Pseudomonas putida (strain ATCC 700007 / DSM 6899 / JCM 31910 / BCRC 17059 / LMG 24140 / F1), this protein is Cobyric acid synthase.